The following is a 532-amino-acid chain: Probable C4-dicarboxylate sensor kinase (532 aa).

Over 1 to 12 the chain is Cytoplasmic; sequence MRLFRQLSIQWK. The helical transmembrane segment at 13-33 threads the bilayer; sequence ITILSFGIVAFALMMVSISLL. At 34-175 the chain is on the extracellular side; the sequence is GYVTSIKEDE…YADMIQEFWQ (142 aa). Residues 176 to 196 traverse the membrane as a helical segment; that stretch reads PALLIGLITALFGFWGSWLLA. The Cytoplasmic segment spans residues 197 to 532; that stretch reads SHIKRQTFNM…FSIYLPKKRG (336 aa). Residues 216–279 form the PAS domain; it reads VERDASFNAI…PEILSIGKPL (64 aa). Residues 315-531 enclose the Histidine kinase domain; the sequence is SDVDRLAEEL…TFSIYLPKKR (217 aa). H339 carries the post-translational modification Phosphohistidine; by autocatalysis.

It is found in the cell membrane. The catalysed reaction is ATP + protein L-histidine = ADP + protein N-phospho-L-histidine.. Functionally, member of the two-component regulatory system DctS/DctR. Probably activates DctR by phosphorylation. Essential for expression of dctP. This Halalkalibacterium halodurans (strain ATCC BAA-125 / DSM 18197 / FERM 7344 / JCM 9153 / C-125) (Bacillus halodurans) protein is Probable C4-dicarboxylate sensor kinase (dctS).